The primary structure comprises 246 residues: Enolase-phosphatase E1 (246 aa).

Mg(2+) is bound by residues aspartate 15 and glutamate 17. Substrate is bound by residues 134–135 (SS) and lysine 174. Aspartate 201 serves as a coordination point for Mg(2+).

Belongs to the HAD-like hydrolase superfamily. MasA/MtnC family. Monomer. The cofactor is Mg(2+).

It localises to the cytoplasm. The protein resides in the nucleus. It catalyses the reaction 5-methylsulfanyl-2,3-dioxopentyl phosphate + H2O = 1,2-dihydroxy-5-(methylsulfanyl)pent-1-en-3-one + phosphate. It participates in amino-acid biosynthesis; L-methionine biosynthesis via salvage pathway; L-methionine from S-methyl-5-thio-alpha-D-ribose 1-phosphate: step 3/6. The protein operates within amino-acid biosynthesis; L-methionine biosynthesis via salvage pathway; L-methionine from S-methyl-5-thio-alpha-D-ribose 1-phosphate: step 4/6. Its function is as follows. Bifunctional enzyme that catalyzes the enolization of 2,3-diketo-5-methylthiopentyl-1-phosphate (DK-MTP-1-P) into the intermediate 2-hydroxy-3-keto-5-methylthiopentenyl-1-phosphate (HK-MTPenyl-1-P), which is then dephosphorylated to form the acireductone 1,2-dihydroxy-3-keto-5-methylthiopentene (DHK-MTPene). The polypeptide is Enolase-phosphatase E1 (Debaryomyces hansenii (strain ATCC 36239 / CBS 767 / BCRC 21394 / JCM 1990 / NBRC 0083 / IGC 2968) (Yeast)).